Consider the following 1018-residue polypeptide: Cytadherence high molecular weight protein 1 (1018 aa).

2 coiled-coil regions span residues 782–815 and 849–880; these read NRFL…AKDL and ELVR…AVYK.

In terms of processing, phosphorylated mainly on serine residues.

The protein resides in the cell projection. The protein localises to the attachment organelle membrane. Component of the cytoskeleton-like structure which stabilizes the shape of the wall-less Mycoplasma. This cytoskeleton-like network of accessory proteins containing HMW proteins 1 to 5 allows the proper anchoring of cytadhesin proteins in the mycoplasmal membrane at the attachment organelle. The polypeptide is Cytadherence high molecular weight protein 1 (hmw1) (Mycoplasma pneumoniae (strain ATCC 29342 / M129 / Subtype 1) (Mycoplasmoides pneumoniae)).